The following is a 375-amino-acid chain: Histidine biosynthesis bifunctional protein HisB (375 aa).

The tract at residues 1-168 is histidinol-phosphatase; sequence MTPILFVDRD…GIAHELADAP (168 aa). Residue aspartate 8 is the Nucleophile of the active site. Mg(2+) is bound by residues aspartate 8, aspartate 10, and aspartate 128. Aspartate 10 functions as the Proton donor in the catalytic mechanism. The interval 169-375 is imidazoleglycerol-phosphate dehydratase; the sequence is RRALVQRNTK…TALPTTKGTL (207 aa).

This sequence in the N-terminal section; belongs to the histidinol-phosphatase family. In the C-terminal section; belongs to the imidazoleglycerol-phosphate dehydratase family. The cofactor is Mg(2+).

The protein resides in the cytoplasm. The catalysed reaction is D-erythro-1-(imidazol-4-yl)glycerol 3-phosphate = 3-(imidazol-4-yl)-2-oxopropyl phosphate + H2O. It carries out the reaction L-histidinol phosphate + H2O = L-histidinol + phosphate. It functions in the pathway amino-acid biosynthesis; L-histidine biosynthesis; L-histidine from 5-phospho-alpha-D-ribose 1-diphosphate: step 6/9. The protein operates within amino-acid biosynthesis; L-histidine biosynthesis; L-histidine from 5-phospho-alpha-D-ribose 1-diphosphate: step 8/9. This Xanthomonas axonopodis pv. citri (strain 306) protein is Histidine biosynthesis bifunctional protein HisB.